Consider the following 364-residue polypeptide: Probable endopolygalacturonase B (364 aa).

An N-terminal signal peptide occupies residues 1-20; it reads MHFFQSSLVAATMGAALVAA. A propeptide spanning residues 21–29 is cleaved from the precursor; sequence APAADLETR. Cys-32 and Cys-47 are joined by a disulfide. Asn-138 and Asn-141 each carry an N-linked (GlcNAc...) asparagine glycan. 6 PbH1 repeats span residues 159–188, 189–210, 211–231, 240–261, 269–291, and 303–324; these read SDHL…DVGS, STYI…AVNS, GEHI…SIGS, VNDV…RIKT, VTGV…VVQQ, and TNGV…TSSA. The Proton donor role is filled by Asp-203. Cysteines 205 and 221 form a disulfide. Residue His-225 is part of the active site. A disulfide bridge links Cys-331 with Cys-336. A glycan (N-linked (GlcNAc...) asparagine) is linked at Asn-338. Cys-355 and Cys-364 are joined by a disulfide.

Belongs to the glycosyl hydrolase 28 family.

Its subcellular location is the secreted. It carries out the reaction (1,4-alpha-D-galacturonosyl)n+m + H2O = (1,4-alpha-D-galacturonosyl)n + (1,4-alpha-D-galacturonosyl)m.. In terms of biological role, involved in maceration and soft-rotting of plant tissue. Hydrolyzes the 1,4-alpha glycosidic bonds of de-esterified pectate in the smooth region of the plant cell wall. The sequence is that of Probable endopolygalacturonase B (pgaB) from Aspergillus fumigatus (strain ATCC MYA-4609 / CBS 101355 / FGSC A1100 / Af293) (Neosartorya fumigata).